The chain runs to 99 residues: MTLVNYLVLSGLLFTIGAATVLVRRNAIIMFMGVELMLNASNLAFVAFGRLHGTLTGEVVAFFVMVVAAAEVVVGLAIIVSIYRARRSVSVDELSLLKN.

A run of 3 helical transmembrane segments spans residues 3–23, 28–48, and 59–79; these read LVNY…TVLV, IIMF…FVAF, and VVAF…LAII.

This sequence belongs to the complex I subunit 4L family. In terms of assembly, NDH-1 is composed of 14 different subunits. Subunits NuoA, H, J, K, L, M, N constitute the membrane sector of the complex.

The protein resides in the cell membrane. The catalysed reaction is a quinone + NADH + 5 H(+)(in) = a quinol + NAD(+) + 4 H(+)(out). Its function is as follows. NDH-1 shuttles electrons from NADH, via FMN and iron-sulfur (Fe-S) centers, to quinones in the respiratory chain. The immediate electron acceptor for the enzyme in this species is believed to be a menaquinone. Couples the redox reaction to proton translocation (for every two electrons transferred, four hydrogen ions are translocated across the cytoplasmic membrane), and thus conserves the redox energy in a proton gradient. The chain is NADH-quinone oxidoreductase subunit K from Beutenbergia cavernae (strain ATCC BAA-8 / DSM 12333 / CCUG 43141 / JCM 11478 / NBRC 16432 / NCIMB 13614 / HKI 0122).